Reading from the N-terminus, the 361-residue chain is uncharacterized protein (361 aa).

A signal peptide spans 1–19 (MNLVICVLLLSIWKNNCMT). Over 20-47 (TNQTNGSSTTGDKPVESMQTKLNYLRRN) the chain is Extracellular. Asparagine 24 carries N-linked (GlcNAc...) asparagine glycosylation. Residues 48-68 (LLILVGIIIMVFVFICFCYLH) form a helical membrane-spanning segment. Residues 69–361 (YNCLSDDASK…QVTSEVTLND (293 aa)) are Cytoplasmic-facing. Polar residues predominate over residues 99–113 (AKTASQCSPETQPML). Disordered stretches follow at residues 99 to 184 (AKTA…KAHK), 209 to 247 (PPQL…NPKR), and 295 to 316 (QNLH…LDSR). A compositionally biased stretch (low complexity) spans 114 to 133 (STADKSSDSSSPERASAQSS). A compositionally biased stretch (polar residues) spans 141 to 150 (SSLQKPSIPN). The segment covering 299–308 (VSSKVKSSSR) has biased composition (low complexity).

The protein resides in the membrane. This is an uncharacterized protein from Homo sapiens (Human).